The sequence spans 112 residues: Phosphoribosyl-AMP cyclohydrolase (112 aa).

Residue Asp-76 participates in Mg(2+) binding. Cys-77 provides a ligand contact to Zn(2+). Asp-78 and Asp-80 together coordinate Mg(2+). Cys-93 and Cys-100 together coordinate Zn(2+).

This sequence belongs to the PRA-CH family. As to quaternary structure, homodimer. Mg(2+) serves as cofactor. It depends on Zn(2+) as a cofactor.

It localises to the cytoplasm. It carries out the reaction 1-(5-phospho-beta-D-ribosyl)-5'-AMP + H2O = 1-(5-phospho-beta-D-ribosyl)-5-[(5-phospho-beta-D-ribosylamino)methylideneamino]imidazole-4-carboxamide. It participates in amino-acid biosynthesis; L-histidine biosynthesis; L-histidine from 5-phospho-alpha-D-ribose 1-diphosphate: step 3/9. Functionally, catalyzes the hydrolysis of the adenine ring of phosphoribosyl-AMP. The sequence is that of Phosphoribosyl-AMP cyclohydrolase from Streptococcus thermophilus (strain ATCC BAA-491 / LMD-9).